Reading from the N-terminus, the 163-residue chain is 3-hydroxyacyl-[acyl-carrier-protein] dehydratase FabZ (163 aa).

The active site involves H58.

Belongs to the thioester dehydratase family. FabZ subfamily.

The protein localises to the cytoplasm. It catalyses the reaction a (3R)-hydroxyacyl-[ACP] = a (2E)-enoyl-[ACP] + H2O. Involved in unsaturated fatty acids biosynthesis. Catalyzes the dehydration of short chain beta-hydroxyacyl-ACPs and long chain saturated and unsaturated beta-hydroxyacyl-ACPs. The sequence is that of 3-hydroxyacyl-[acyl-carrier-protein] dehydratase FabZ from Francisella philomiragia subsp. philomiragia (strain ATCC 25017 / CCUG 19701 / FSC 153 / O#319-036).